The primary structure comprises 160 residues: Lipoprotein signal peptidase (160 aa).

Transmembrane regions (helical) follow at residues 60 to 80 and 84 to 104; these read IEWL…AFFI and LPFL…AGTV. Catalysis depends on residues Asp118 and Asp132. Residues 128 to 148 traverse the membrane as a helical segment; the sequence is FNIADSCLTVGVIGLLLLYIV.

This sequence belongs to the peptidase A8 family.

The protein resides in the cell membrane. The catalysed reaction is Release of signal peptides from bacterial membrane prolipoproteins. Hydrolyzes -Xaa-Yaa-Zaa-|-(S,diacylglyceryl)Cys-, in which Xaa is hydrophobic (preferably Leu), and Yaa (Ala or Ser) and Zaa (Gly or Ala) have small, neutral side chains.. The protein operates within protein modification; lipoprotein biosynthesis (signal peptide cleavage). This protein specifically catalyzes the removal of signal peptides from prolipoproteins. The polypeptide is Lipoprotein signal peptidase (Dehalococcoides mccartyi (strain CBDB1)).